Consider the following 258-residue polypeptide: Pimeloyl-[acyl-carrier protein] methyl ester esterase (258 aa).

An AB hydrolase-1 domain is found at Leu-16–Glu-244. Substrate contacts are provided by residues Trp-22, Ser-82–Leu-83, and Phe-146–Gln-150. The active-site Nucleophile is Ser-82. Catalysis depends on residues Asp-210 and His-238. Residue His-238 participates in substrate binding.

This sequence belongs to the AB hydrolase superfamily. Carboxylesterase BioH family. As to quaternary structure, monomer.

Its subcellular location is the cytoplasm. It catalyses the reaction 6-carboxyhexanoyl-[ACP] methyl ester + H2O = 6-carboxyhexanoyl-[ACP] + methanol + H(+). It participates in cofactor biosynthesis; biotin biosynthesis. Its function is as follows. The physiological role of BioH is to remove the methyl group introduced by BioC when the pimeloyl moiety is complete. It allows to synthesize pimeloyl-ACP via the fatty acid synthetic pathway through the hydrolysis of the ester bonds of pimeloyl-ACP esters. The protein is Pimeloyl-[acyl-carrier protein] methyl ester esterase of Vibrio atlanticus (strain LGP32) (Vibrio splendidus (strain Mel32)).